The primary structure comprises 85 residues: Omega-conotoxin-like Am6.5 (85 aa).

The first 19 residues, 1-19, serve as a signal peptide directing secretion; the sequence is MCILIVAVLFLTAWTFVMA. Positions 20–53 are excised as a propeptide; that stretch reads DDPRDEPDTVVRGGKLFSRARDEMNPAASKLNER. 3 disulfide bridges follow: Cys55/Cys73, Cys62/Cys77, and Cys72/Cys81. Position 84 is a glutamine amide (Gln84).

It belongs to the conotoxin O1 family. In terms of processing, is not hydroxylated. Expressed by the venom duct.

The protein localises to the secreted. In terms of biological role, omega-conotoxins act at presynaptic membranes, they bind and block voltage-gated calcium channels (Cav). The protein is Omega-conotoxin-like Am6.5 of Conus amadis (Amadis cone).